An 80-amino-acid polypeptide reads, in one-letter code: Small ribosomal subunit protein bS18 (80 aa).

The protein belongs to the bacterial ribosomal protein bS18 family. Part of the 30S ribosomal subunit. Forms a tight heterodimer with protein bS6.

In terms of biological role, binds as a heterodimer with protein bS6 to the central domain of the 16S rRNA, where it helps stabilize the platform of the 30S subunit. The protein is Small ribosomal subunit protein bS18 of Clostridium botulinum (strain 657 / Type Ba4).